The chain runs to 358 residues: Snurportin-1 (358 aa).

At Met-1 the chain carries N-acetylmethionine. 2 disordered regions span residues 1–26 and 69–90; these read MEELSQALASSFSVSQELNSTAAPHP and DWTGMESGEEENKKDEEEMDID. The necessary for interaction with KPNB1 and m3G-cap U1 and U5 snRNP import receptor activity stretch occupies residues 1–65; sequence MEELSQALAS…LDYVNHARRL (65 aa). The segment at 1 to 160 is necessary for interaction with XPO1; sequence MEELSQALAS…NRFSSLLPGG (160 aa). Over residues 7 to 22 the composition is skewed to polar residues; that stretch reads ALASSFSVSQELNSTA. The 63-residue stretch at 11 to 73 folds into the IBB domain; it reads SFSVSQELNS…RLAEDDWTGM (63 aa). At Ser-75 the chain carries Phosphoserine. The interval 128–130 is interaction with m3G-cap structure; it reads GKR. The segment at 210–329 is necessary for binding to the m3G-cap structure; that stretch reads MHSKLPEEEG…DTKEKLTHKA (120 aa). Residues 315–341 show a composition bias toward basic and acidic residues; that stretch reads KRSQEDTKEKLTHKASENGHYELEHLS. Residues 315–358 are disordered; it reads KRSQEDTKEKLTHKASENGHYELEHLSTPKLRNPPHSSESLMDN. Residues 349–358 show a composition bias toward polar residues; it reads PHSSESLMDN. Ser-351 carries the post-translational modification Phosphoserine.

The protein belongs to the snurportin family. As to quaternary structure, component of an import snRNP complex composed of KPNB1, SNUPN, SMN1 and ZNF259. Component of a nuclear export receptor complex composed of KPNB1, Ran, SNUPN and XPO1. Found in a trimeric export complex with SNUPN, Ran and XPO1. Interacts (via IBB domain) with KPNB1; the interaction is direct. Interacts with DDX20, IPO7, SMN1, SNRPB and XPO1. Interacts directly with XPO1. Its interaction with XPO1 and binding to m3G-cap U snRNPs appears to be mutually exclusive. Can form homomers.

Its subcellular location is the nucleus. The protein localises to the cytoplasm. Functionally, functions as an U snRNP-specific nuclear import adapter. Involved in the trimethylguanosine (m3G)-cap-dependent nuclear import of U snRNPs. Binds specifically to the terminal m3G-cap U snRNAs. In Mus musculus (Mouse), this protein is Snurportin-1 (Snupn).